The sequence spans 157 residues: Eukaryotic translation initiation factor 5A-2 (157 aa).

At Ser-2 the chain carries N-acetylserine. Ser-2 carries the phosphoserine modification. Thr-7 carries the phosphothreonine modification. Residue Lys-51 is modified to Hypusine. Ser-74 is subject to Phosphoserine. A Glycyl lysine isopeptide (Lys-Gly) (interchain with G-Cter in ubiquitin) cross-link involves residue Lys-86.

It belongs to the eIF-5A family. As to quaternary structure, homodimer. Binds to 80S ribosomes. Actively translating ribosomes show mutually exclusive binding of eIF5a (HYP2 or ANB1) and EFT1/eEF2. Interacts with DYS1 and LIA1. In terms of processing, lys-51 undergoes hypusination, a unique post-translational modification that consists in the addition of a butylamino group from spermidine to lysine side chain, leading to the formation of the unusual amino acid hypusine. eIF-5As are the only known proteins to undergo this modification, which is essential for their function.

It is found in the cytoplasm. Translation factor that promotes translation elongation and termination, particularly upon ribosome stalling at specific amino acid sequence contexts. Binds between the exit (E) and peptidyl (P) site of the ribosome and promotes rescue of stalled ribosome: specifically required for efficient translation of polyproline-containing peptides as well as other motifs that stall the ribosome. Acts as ribosome quality control (RQC) cofactor by joining the RQC complex to facilitate peptidyl transfer during CAT tailing step. Involved in actin dynamics and cell cycle progression, mRNA decay and probably in a pathway involved in stress response and maintenance of cell wall integrity. The chain is Eukaryotic translation initiation factor 5A-2 (ANB1) from Saccharomyces cerevisiae (strain ATCC 204508 / S288c) (Baker's yeast).